The chain runs to 355 residues: Peptide chain release factor 1 (355 aa).

N5-methylglutamine is present on Q233.

It belongs to the prokaryotic/mitochondrial release factor family. In terms of processing, methylated by PrmC. Methylation increases the termination efficiency of RF1.

It localises to the cytoplasm. Peptide chain release factor 1 directs the termination of translation in response to the peptide chain termination codons UAG and UAA. This Bacillus mycoides (strain KBAB4) (Bacillus weihenstephanensis) protein is Peptide chain release factor 1.